Consider the following 674-residue polypeptide: Ribonuclease E (674 aa).

Residues Gly35–Arg117 enclose the S1 motif domain. Mg(2+) contacts are provided by Asp296 and Asp339. Residues Cys397 and Cys400 each coordinate Zn(2+). Disordered regions lie at residues Pro458 to Glu529 and Gln626 to Glu674. Basic and acidic residues-rich tracts occupy residues Gly484–Ile493 and Thr509–Glu529. The span at Arg663–Glu674 shows a compositional bias: basic residues. A C4 Arg-rich motif, probably responsible for interaction with PNPase motif is present at residues Gly665–Ala673.

This sequence belongs to the RNase E/G family. As to quaternary structure, fractionates in a 250-300 kDa region, which is too small to be the equivalent of an RNA degradosome, as occurs with E.coli RNase E. Interacts with polynucleotide phosphorylase (PNPase, pnp), probably via the C4 Arg-rich motif (residues 665-673). It depends on Mg(2+) as a cofactor.

It localises to the cytoplasm. Its subcellular location is the cell inner membrane. The catalysed reaction is Endonucleolytic cleavage of single-stranded RNA in A- and U-rich regions.. Functionally, endoribonuclease that plays a central role in rRNA processing and mRNA decay, and probably tRNA processing. Acts on 9S rRNA (the precursor of 5S rRNA) and RNAI, a molecule that controls the replication of ColE1 plasmid. Upon expression in E.coli does not purify with endogenous degradosome proteins. Prefers 5'-monophosphorylated substrates over 5'-triphosphorylated substrates. Complements an rne temperature-sensitive mutation in E.coli, despite being considerably shorter and not able to interact with the E.coli degradosome. Cleaves AU-rich sequences in vitro, tested with psbA2 mRNA. Complements both an rne temperature-sensitive mutation and an rng deletion in E.coli. Acts in the degradation of psaL mRNA in the presence but not the absence of the sRNA PsrR1. Cleaves the rimO-crhR transcript, contributing to the very short half-life of rimO mRNA. Its function is as follows. mRNA for psbA2, one of the core proteins in photosystem II, is degraded in the dark under control of a cis-acting AU-rich box in its 5'-UTR. RNase E cuts in this box, suggesting it is involved in this dark-induced mRNA instability. In terms of biological role, CRISPR (clustered regularly interspaced short palindromic repeat) is an adaptive immune system that provides protection against mobile genetic elements (viruses, transposable elements and conjugative plasmids). CRISPR clusters contain spacers, sequences complementary to antecedent mobile elements, and target invading nucleic acids. CRISPR clusters are transcribed and processed into CRISPR RNA (crRNA). Endogenous RNase E is required for correct processing of pre-crRNA for the CRISPR3 subtype III-B system in this genome (genes sll7080 to sll7095). This CRISPR3 system does not include a cas6 gene, which is the usual RNase involved in crRNA maturation. The sequence is that of Ribonuclease E from Synechocystis sp. (strain ATCC 27184 / PCC 6803 / Kazusa).